A 126-amino-acid polypeptide reads, in one-letter code: Aspartate 1-decarboxylase (126 aa).

The active-site Schiff-base intermediate with substrate; via pyruvic acid is the serine 25. A Pyruvic acid (Ser) modification is found at serine 25. Threonine 57 lines the substrate pocket. Tyrosine 58 acts as the Proton donor in catalysis. 73–75 serves as a coordination point for substrate; the sequence is GGA.

Belongs to the PanD family. As to quaternary structure, heterooctamer of four alpha and four beta subunits. Pyruvate serves as cofactor. Is synthesized initially as an inactive proenzyme, which is activated by self-cleavage at a specific serine bond to produce a beta-subunit with a hydroxyl group at its C-terminus and an alpha-subunit with a pyruvoyl group at its N-terminus.

Its subcellular location is the cytoplasm. The enzyme catalyses L-aspartate + H(+) = beta-alanine + CO2. Its pathway is cofactor biosynthesis; (R)-pantothenate biosynthesis; beta-alanine from L-aspartate: step 1/1. In terms of biological role, catalyzes the pyruvoyl-dependent decarboxylation of aspartate to produce beta-alanine. The polypeptide is Aspartate 1-decarboxylase (Acinetobacter baumannii (strain AB307-0294)).